Here is a 212-residue protein sequence, read N- to C-terminus: Pyridoxine/pyridoxamine 5'-phosphate oxidase (212 aa).

Substrate-binding positions include 8–11 (RREY) and K66. FMN-binding positions include 61-66 (RIVLLK), 76-77 (FT), R82, K83, and Q105. 3 residues coordinate substrate: Y123, R127, and S131. Residues 140-141 (QS) and W185 contribute to the FMN site. 191-193 (RLH) serves as a coordination point for substrate. R195 is a binding site for FMN.

This sequence belongs to the pyridoxamine 5'-phosphate oxidase family. In terms of assembly, homodimer. Requires FMN as cofactor.

The catalysed reaction is pyridoxamine 5'-phosphate + O2 + H2O = pyridoxal 5'-phosphate + H2O2 + NH4(+). The enzyme catalyses pyridoxine 5'-phosphate + O2 = pyridoxal 5'-phosphate + H2O2. It participates in cofactor metabolism; pyridoxal 5'-phosphate salvage; pyridoxal 5'-phosphate from pyridoxamine 5'-phosphate: step 1/1. The protein operates within cofactor metabolism; pyridoxal 5'-phosphate salvage; pyridoxal 5'-phosphate from pyridoxine 5'-phosphate: step 1/1. In terms of biological role, catalyzes the oxidation of either pyridoxine 5'-phosphate (PNP) or pyridoxamine 5'-phosphate (PMP) into pyridoxal 5'-phosphate (PLP). This Shewanella frigidimarina (strain NCIMB 400) protein is Pyridoxine/pyridoxamine 5'-phosphate oxidase.